The primary structure comprises 31 residues: Protein YmiC (31 aa).

A helical membrane pass occupies residues 9 to 29 (WSWMGAFSLSMLFWAELLWII).

The protein resides in the cell inner membrane. The sequence is that of Protein YmiC from Escherichia coli (strain K12).